Consider the following 194-residue polypeptide: Holliday junction branch migration complex subunit RuvA (194 aa).

A domain I region spans residues 1 to 61 (MIASLSGLLE…EDSVSLYGFA (61 aa)). Positions 62–136 (SVLECTVFEQ…GKLTSVPLEN (75 aa)) are domain II. The tract at residues 136 to 140 (NRKQE) is flexible linker. The domain III stretch occupies residues 141–194 (QAVDRSAEIVQALIGLGWQRQESAAAVESVLEKDQSLTMPEILRNALRYLAKQE).

Belongs to the RuvA family. As to quaternary structure, homotetramer. Forms an RuvA(8)-RuvB(12)-Holliday junction (HJ) complex. HJ DNA is sandwiched between 2 RuvA tetramers; dsDNA enters through RuvA and exits via RuvB. An RuvB hexamer assembles on each DNA strand where it exits the tetramer. Each RuvB hexamer is contacted by two RuvA subunits (via domain III) on 2 adjacent RuvB subunits; this complex drives branch migration. In the full resolvosome a probable DNA-RuvA(4)-RuvB(12)-RuvC(2) complex forms which resolves the HJ.

The protein resides in the cytoplasm. Functionally, the RuvA-RuvB-RuvC complex processes Holliday junction (HJ) DNA during genetic recombination and DNA repair, while the RuvA-RuvB complex plays an important role in the rescue of blocked DNA replication forks via replication fork reversal (RFR). RuvA specifically binds to HJ cruciform DNA, conferring on it an open structure. The RuvB hexamer acts as an ATP-dependent pump, pulling dsDNA into and through the RuvAB complex. HJ branch migration allows RuvC to scan DNA until it finds its consensus sequence, where it cleaves and resolves the cruciform DNA. The polypeptide is Holliday junction branch migration complex subunit RuvA (Tropheryma whipplei (strain Twist) (Whipple's bacillus)).